Here is a 418-residue protein sequence, read N- to C-terminus: Tryptophan synthase beta chain (418 aa).

Lysine 109 bears the N6-(pyridoxal phosphate)lysine mark.

Belongs to the TrpB family. Tetramer of two alpha and two beta chains. It depends on pyridoxal 5'-phosphate as a cofactor.

It catalyses the reaction (1S,2R)-1-C-(indol-3-yl)glycerol 3-phosphate + L-serine = D-glyceraldehyde 3-phosphate + L-tryptophan + H2O. Its pathway is amino-acid biosynthesis; L-tryptophan biosynthesis; L-tryptophan from chorismate: step 5/5. In terms of biological role, the beta subunit is responsible for the synthesis of L-tryptophan from indole and L-serine. This chain is Tryptophan synthase beta chain, found in Thermus thermophilus (strain ATCC 27634 / DSM 579 / HB8).